A 131-amino-acid polypeptide reads, in one-letter code: Small ribosomal subunit protein uS8 (131 aa).

This sequence belongs to the universal ribosomal protein uS8 family. Part of the 30S ribosomal subunit. Contacts proteins S5 and S12.

Its function is as follows. One of the primary rRNA binding proteins, it binds directly to 16S rRNA central domain where it helps coordinate assembly of the platform of the 30S subunit. The chain is Small ribosomal subunit protein uS8 from Ruminiclostridium cellulolyticum (strain ATCC 35319 / DSM 5812 / JCM 6584 / H10) (Clostridium cellulolyticum).